The sequence spans 343 residues: UPF0283 membrane protein blr7254 (343 aa).

3 helical membrane-spanning segments follow: residues 64 to 84 (GALF…LGVV), 97 to 117 (LGFV…VVIG), and 214 to 234 (IVTA…VAAL).

This sequence belongs to the UPF0283 family.

It is found in the cell inner membrane. This is UPF0283 membrane protein blr7254 from Bradyrhizobium diazoefficiens (strain JCM 10833 / BCRC 13528 / IAM 13628 / NBRC 14792 / USDA 110).